The chain runs to 200 residues: Recombination protein RecR (200 aa).

The segment at 57–72 (CRQCRTLTEQELCPQC) adopts a C4-type zinc-finger fold. The Toprim domain occupies 80 to 175 (TQLCVVEGPV…TATRIAHGVP (96 aa)).

Belongs to the RecR family.

May play a role in DNA repair. It seems to be involved in an RecBC-independent recombinational process of DNA repair. It may act with RecF and RecO. The polypeptide is Recombination protein RecR (Pseudomonas entomophila (strain L48)).